A 217-amino-acid polypeptide reads, in one-letter code: Leucyl/phenylalanyl-tRNA--protein transferase (217 aa).

It belongs to the L/F-transferase family.

Its subcellular location is the cytoplasm. It catalyses the reaction N-terminal L-lysyl-[protein] + L-leucyl-tRNA(Leu) = N-terminal L-leucyl-L-lysyl-[protein] + tRNA(Leu) + H(+). It carries out the reaction N-terminal L-arginyl-[protein] + L-leucyl-tRNA(Leu) = N-terminal L-leucyl-L-arginyl-[protein] + tRNA(Leu) + H(+). The catalysed reaction is L-phenylalanyl-tRNA(Phe) + an N-terminal L-alpha-aminoacyl-[protein] = an N-terminal L-phenylalanyl-L-alpha-aminoacyl-[protein] + tRNA(Phe). In terms of biological role, functions in the N-end rule pathway of protein degradation where it conjugates Leu, Phe and, less efficiently, Met from aminoacyl-tRNAs to the N-termini of proteins containing an N-terminal arginine or lysine. In Caulobacter vibrioides (strain ATCC 19089 / CIP 103742 / CB 15) (Caulobacter crescentus), this protein is Leucyl/phenylalanyl-tRNA--protein transferase.